Here is a 252-residue protein sequence, read N- to C-terminus: Probable transcriptional regulatory protein Fnod_1106 (252 aa).

It belongs to the TACO1 family.

It localises to the cytoplasm. The protein is Probable transcriptional regulatory protein Fnod_1106 of Fervidobacterium nodosum (strain ATCC 35602 / DSM 5306 / Rt17-B1).